The following is a 688-amino-acid chain: Zinc finger CCCH domain-containing protein 22 (688 aa).

The interval 62 to 123 (ALLPPPPPPS…QPFSRSNGSV (62 aa)) is disordered. Over residues 101-117 (PLSASSPSSWAQAQPFS) the composition is skewed to low complexity. The segment at 233–260 (GFGWKPCLYYARGFCKNGSSCRFVHGDD) adopts a C3H1-type zinc-finger fold. Positions 366–442 (RQIYLTFPAD…RVLVKPYKEK (77 aa)) constitute an RRM domain. The stretch at 487-522 (TNEMMLRRKLEEQQQAAELQQAIELHSRRLMDLQLL) forms a coiled coil. The tract at residues 552–624 (LATTMVESPP…PTKSSVSAHQ (73 aa)) is disordered. The span at 574 to 589 (TEERKMVNGGGDKEES) shows a compositional bias: basic and acidic residues. Residues 613 to 624 (ASPTKSSVSAHQ) show a composition bias toward polar residues.

In Oryza sativa subsp. japonica (Rice), this protein is Zinc finger CCCH domain-containing protein 22.